Reading from the N-terminus, the 472-residue chain is FAD-dependent monooxygenase ltmM (472 aa).

A helical transmembrane segment spans residues valine 7–glycine 27. FAD contacts are provided by glutamate 34, glycine 48, and arginine 107. An N-linked (GlcNAc...) asparagine glycan is attached at asparagine 186. 2 residues coordinate FAD: aspartate 306 and alanine 319. Residues isoleucine 450 to leucine 470 traverse the membrane as a helical segment.

The protein belongs to the paxM FAD-dependent monooxygenase family. The cofactor is FAD.

Its subcellular location is the membrane. Its pathway is secondary metabolite biosynthesis. Functionally, FAD-dependent monooxygenase; part of the gene cluster that mediates the biosynthesis of lolitrems, indole-diterpene mycotoxins that are potent tremorgens in mammals, and are synthesized by clavicipitaceous fungal endophytes in association with their grass hosts. The geranylgeranyl diphosphate (GGPP) synthase ltmG is proposed to catalyze the first step in lolitrem biosynthesis. LtmG catalyzes a series of iterative condensations of isopentenyl diphosphate (IPP) with dimethylallyl diphosphate (DMAPP), geranyl diphosphate (GPP), and farnesyl diphosphate (FPP), to form GGPP. GGPP then condenses with indole-3-glycerol phosphate to form 3-geranylgeranylindole, an acyclic intermediate, to be incorporated into paxilline. Either ltmG or ltmC could be responsible for this step, as both are putative prenyl transferases. The FAD-dependent monooxygenase ltmM then catalyzes the epoxidation of the two terminal alkenes of the geranylgeranyl moiety, which is subsequently cyclized by ltmC, to paspaline. The cytochrome P450 monooxygenases ltmQ and ltmP can sequentially oxidize paspaline to terpendole E and terpendole F. Alternatively, ltmP converts paspaline to an intermediate which is oxidized by ltmQ to terpendole F. LtmF, ltmK, ltmE and ltmJ appear to be unique to the epichloe endophytes. The prenyltransferase ltmF is involved in the 27-hydroxyl-O-prenylation. The cytochrome P450 monooxygenase ltmK is required for the oxidative acetal ring formation. The multi-functional prenyltransferase ltmE is required for C20- and C21-prenylations of the indole ring of paspalanes and acts together with the cytochrome P450 monooxygenase ltmJ to yield lolitremanes by multiple oxidations and ring closures. The stereoisomer pairs of lolitriol and lolitrem N or lolitrem B and lolitrem F may be attributed to variations in the way in which ring closure can occur under the action of ltmJ. While the major product of this pathway is lolitrem B, the prenyl transferases and cytochrome P450 monooxygenases identified in this pathway have a remarkable versatility in their regio- and stereo-specificities to generate a diverse range of metabolites that are products of a metabolic grid rather than a linear pathway. In Epichloe festucae (strain Fl1), this protein is FAD-dependent monooxygenase ltmM (ltmM).